The sequence spans 343 residues: tRNA N6-adenosine threonylcarbamoyltransferase (343 aa).

Positions 120 and 124 each coordinate Fe cation. Residues 142–146, D175, G188, D192, and N281 each bind substrate; that span reads VVSGG. Residue D310 participates in Fe cation binding.

It belongs to the KAE1 / TsaD family. The cofactor is Fe(2+).

The protein resides in the cytoplasm. It carries out the reaction L-threonylcarbamoyladenylate + adenosine(37) in tRNA = N(6)-L-threonylcarbamoyladenosine(37) in tRNA + AMP + H(+). Its function is as follows. Required for the formation of a threonylcarbamoyl group on adenosine at position 37 (t(6)A37) in tRNAs that read codons beginning with adenine. Is involved in the transfer of the threonylcarbamoyl moiety of threonylcarbamoyl-AMP (TC-AMP) to the N6 group of A37, together with TsaE and TsaB. TsaD likely plays a direct catalytic role in this reaction. This chain is tRNA N6-adenosine threonylcarbamoyltransferase, found in Bacillus cereus (strain ATCC 14579 / DSM 31 / CCUG 7414 / JCM 2152 / NBRC 15305 / NCIMB 9373 / NCTC 2599 / NRRL B-3711).